The primary structure comprises 190 residues: Orotate phosphoribosyltransferase (190 aa).

114–122 (EDVITTGGS) contributes to the 5-phospho-alpha-D-ribose 1-diphosphate binding site. Positions 118 and 146 each coordinate orotate.

Belongs to the purine/pyrimidine phosphoribosyltransferase family. PyrE subfamily. Homodimer. The cofactor is Mg(2+).

The enzyme catalyses orotidine 5'-phosphate + diphosphate = orotate + 5-phospho-alpha-D-ribose 1-diphosphate. It participates in pyrimidine metabolism; UMP biosynthesis via de novo pathway; UMP from orotate: step 1/2. In terms of biological role, catalyzes the transfer of a ribosyl phosphate group from 5-phosphoribose 1-diphosphate to orotate, leading to the formation of orotidine monophosphate (OMP). The protein is Orotate phosphoribosyltransferase of Caldicellulosiruptor bescii (strain ATCC BAA-1888 / DSM 6725 / KCTC 15123 / Z-1320) (Anaerocellum thermophilum).